The chain runs to 852 residues: DNA repair protein rhp54 (852 aa).

2 consecutive short sequence motifs (nuclear localization signal) follow at residues 35-51 (KKFK…RKEL) and 178-181 (KRKK). Basic and acidic residues predominate over residues 187 to 205 (NRKGKKEISDSEPESDHDS). The segment at 187-208 (NRKGKKEISDSEPESDHDSCVS) is disordered. In terms of domain architecture, Helicase ATP-binding spans 281-459 (GRIDRCANGC…FSLLNFANPG (179 aa)). Residue 294–301 (DEMGLGKT) coordinates ATP. Residues 410 to 413 (DEGH) carry the DEGH box motif. Positions 614-767 (VLERMLYQIK…CVVDEAQDVE (154 aa)) constitute a Helicase C-terminal domain.

It belongs to the SNF2/RAD54 helicase family. In terms of assembly, homohexamer. Interacts with rhp51.

It localises to the nucleus. It catalyses the reaction ATP + H2O = ADP + phosphate + H(+). Plays an essential role in homologous recombination (HR) which is a major pathway for repairing DNA double-strand breaks (DSBs), single-stranded DNA (ssDNA) gaps, and stalled or collapsed replication forks. Acts as a molecular motor during the homology search and guides RAD51 ssDNA along a donor dsDNA thereby changing the homology search from the diffusion-based mechanism to a motor-guided mechanism. Plays also an essential role in RAD51-mediated synaptic complex formation which consists of three strands encased in a protein filament formed once homology is recognized. Once DNA strand exchange occured, dissociates RAD51 from nucleoprotein filaments formed on dsDNA. The polypeptide is DNA repair protein rhp54 (rhp54) (Schizosaccharomyces pombe (strain 972 / ATCC 24843) (Fission yeast)).